Reading from the N-terminus, the 229-residue chain is Large ribosomal subunit protein uL1 (229 aa).

This sequence belongs to the universal ribosomal protein uL1 family. Part of the 50S ribosomal subunit.

Its function is as follows. Binds directly to 23S rRNA. The L1 stalk is quite mobile in the ribosome, and is involved in E site tRNA release. Functionally, protein L1 is also a translational repressor protein, it controls the translation of the L11 operon by binding to its mRNA. The chain is Large ribosomal subunit protein uL1 from Histophilus somni (strain 2336) (Haemophilus somnus).